Consider the following 379-residue polypeptide: Isocitrate dehydrogenase [NAD] subunit 2, mitochondrial (379 aa).

The transit peptide at 1–27 directs the protein to the mitochondrion; it reads MSMLSTLRTAGSLRTFSRSACYSFQRF. Residues R129, R139, R160, and D247 each coordinate substrate. Residues D247, D273, and D277 each contribute to the Mg(2+) site.

Belongs to the isocitrate and isopropylmalate dehydrogenases family. Octamer of two non-identical subunits IDH1 and IDH2. Requires Mg(2+) as cofactor. Mn(2+) is required as a cofactor.

It is found in the mitochondrion. It catalyses the reaction D-threo-isocitrate + NAD(+) = 2-oxoglutarate + CO2 + NADH. In terms of biological role, performs an essential role in the oxidative function of the citric acid cycle and is involved in glutamate biosynthesis. Also binds RNA; specifically to the 5'-untranslated leaders of mitochondrial mRNAs. In Schizosaccharomyces pombe (strain 972 / ATCC 24843) (Fission yeast), this protein is Isocitrate dehydrogenase [NAD] subunit 2, mitochondrial (idh2).